A 399-amino-acid chain; its full sequence is Lymphoid enhancer-binding factor 1 (399 aa).

The segment covering 1 to 14 (MPQLSGGGGGGGGD) has biased composition (gly residues). The CTNNB1-binding stretch occupies residues 1 to 62 (MPQLSGGGGG…IKSSLVNESE (62 aa)). A disordered region spans residues 1-104 (MPQLSGGGGG…KHPDGGLYNK (104 aa)). 2 stretches are compositionally biased toward basic and acidic residues: residues 24-45 (IPFK…SHPE) and 82-98 (PYHD…KHPD). A Glycyl lysine isopeptide (Lys-Gly) (interchain with G-Cter in SUMO) cross-link involves residue Lys27. Ser132 is modified (phosphoserine). Position 155 is a phosphothreonine; by NLK (Thr155). Position 166 is a phosphoserine; by NLK (Ser166). Disordered stretches follow at residues 166 to 192 (SPGS…PAPD) and 268 to 298 (VKQE…KRPH). A Glycyl lysine isopeptide (Lys-Gly) (interchain with G-Cter in SUMO) cross-link involves residue Lys269. The span at 269-296 (KQEHPHTDSDLMHVKPQHEQRKEQEPKR) shows a compositional bias: basic and acidic residues. Positions 299–367 (IKKPLNAFML…LHMQLYPGWS (69 aa)) form a DNA-binding region, HMG box. The disordered stretch occupies residues 369-399 (RDNYGKKKKRKREKLQESASGTGPRMTAAYI).

It belongs to the TCF/LEF family. Binds the armadillo repeat of CTNNB1 and forms a stable complex. Interacts with EP300, TLE1 and PIASG. Binds ALYREF/THOC4, MDFI and MDFIC. Interacts with NLK. Interacts with DAZAP2. Phosphorylated at Thr-155 and/or Ser-166 by NLK. Phosphorylation by NLK at these sites represses LEF1-mediated transcriptional activation of target genes of the canonical Wnt signaling pathway. As to expression, detected in thymus. Not detected in normal colon, but highly expressed in colon cancer biopsies and colon cancer cell lines. Expressed in several pancreatic tumors and weakly expressed in normal pancreatic tissue. Isoforms 1 and 5 are detected in several pancreatic cell lines.

The protein resides in the nucleus. Its function is as follows. Transcription factor that binds DNA in a sequence-specific manner. Participates in the Wnt signaling pathway. Activates transcription of target genes in the presence of CTNNB1 and EP300. PIAG antagonizes both Wnt-dependent and Wnt-independent activation by LEF1. TLE1, TLE2, TLE3 and TLE4 repress transactivation mediated by LEF1 and CTNNB1. Regulates T-cell receptor alpha enhancer function. Required for IL17A expressing gamma-delta T-cell maturation and development, via binding to regulator loci of BLK to modulate expression. Acts as a positive regulator of odontoblast differentiation during mesenchymal tooth germ formation, expression is repressed during the bell stage by MSX1-mediated inhibition of CTNNB1 signaling. May play a role in hair cell differentiation and follicle morphogenesis. Functionally, transcriptionally activates MYC and CCND1 expression and enhances proliferation of pancreatic tumor cells. In terms of biological role, lacks the CTNNB1 interaction domain and may therefore be an antagonist for Wnt signaling. Transcriptionally activates the fibronectin promoter, binds to and represses transcription from the E-cadherin promoter in a CTNNB1-independent manner, and is involved in reducing cellular aggregation and increasing cell migration of pancreatic cancer cells. The polypeptide is Lymphoid enhancer-binding factor 1 (Homo sapiens (Human)).